We begin with the raw amino-acid sequence, 1102 residues long: Probable leucine-rich repeat receptor-like protein kinase At5g63930 (1102 aa).

An N-terminal signal peptide occupies residues 1–26 (MVKEMMKLAVFFISLLLILLISETTG). Over 27–737 (LNLEGQYLLE…GKPGGMRSSK (711 aa)) the chain is Extracellular. Asn-54, Asn-68, Asn-79, and Asn-119 each carry an N-linked (GlcNAc...) asparagine glycan. LRR repeat units lie at residues 72–96 (DPEV…IGGL), 97–120 (VHLK…IGNC), 122–144 (SLEI…IGKL), 145–170 (VSLE…NLLS), 172–192 (SQLV…IGNL), 193–216 (KRLT…IGGC), 217–241 (ESLV…GMLK), 243–264 (LSQV…ISNC), 265–288 (TSLE…LGDL), 289–312 (QSLE…IGNL), 314–336 (YAIE…LGNI), 337–360 (EGLE…LSTL), 361–383 (KNLS…GFQY), 385–408 (RGLF…LGWY), 409–432 (SDLW…LCLH), 433–456 (SNMI…ITTC), 458–480 (TLVQ…LCKQ), 481–504 (VNVT…VGNC), 505–528 (SALQ…IGML), 529–552 (SQLG…IFNC), 554–576 (MLQR…VGSL), 577–602 (YQLE…NLSR), 604–624 (TELQ…LGSL), 625–649 (TGLQ…LSNL), 651–672 (MLEF…SFAN), and 674–700 (SSLL…SMSS). An N-linked (GlcNAc...) asparagine glycan is attached at Asn-180. A glycan (N-linked (GlcNAc...) asparagine) is linked at Asn-263. N-linked (GlcNAc...) asparagine glycans are attached at residues Asn-302 and Asn-311. Asn-362 is a glycosylation site (N-linked (GlcNAc...) asparagine). Residue Asn-444 is glycosylated (N-linked (GlcNAc...) asparagine). N-linked (GlcNAc...) asparagine glycans are attached at residues Asn-482 and Asn-503. Asn-535, Asn-564, Asn-588, Asn-599, Asn-614, Asn-632, Asn-661, Asn-672, Asn-680, and Asn-695 each carry an N-linked (GlcNAc...) asparagine glycan. The chain crosses the membrane as a helical span at residues 738-758 (IIAITAAVIGGVSLMLIALIV). Residues 759–1102 (YLMRRPVRTV…TEELTQTTTP (344 aa)) are Cytoplasmic-facing. Residues Thr-793 and Thr-801 each carry the phosphothreonine modification. In terms of domain architecture, Protein kinase spans 804–1091 (FDESFVVGRG…ERSEGEQEHL (288 aa)). Residues 810 to 818 (VGRGACGTV) and Lys-832 each bind ATP. Tyr-882 and Tyr-919 each carry phosphotyrosine. Asp-932 serves as the catalytic Proton acceptor. Ser-966 is subject to Phosphoserine. Residues Tyr-974 and Tyr-981 each carry the phosphotyrosine modification. Phosphothreonine is present on Thr-982.

Belongs to the protein kinase superfamily. Ser/Thr protein kinase family.

Its subcellular location is the cell membrane. It catalyses the reaction L-seryl-[protein] + ATP = O-phospho-L-seryl-[protein] + ADP + H(+). It carries out the reaction L-threonyl-[protein] + ATP = O-phospho-L-threonyl-[protein] + ADP + H(+). In Arabidopsis thaliana (Mouse-ear cress), this protein is Probable leucine-rich repeat receptor-like protein kinase At5g63930.